The primary structure comprises 156 residues: Cyclic pyranopterin monophosphate synthase (156 aa).

Residues 75–77 and 111–112 each bind substrate; these read LCH and ME. Asp-126 is a catalytic residue.

This sequence belongs to the MoaC family. Homohexamer; trimer of dimers.

It carries out the reaction (8S)-3',8-cyclo-7,8-dihydroguanosine 5'-triphosphate = cyclic pyranopterin phosphate + diphosphate. Its pathway is cofactor biosynthesis; molybdopterin biosynthesis. In terms of biological role, catalyzes the conversion of (8S)-3',8-cyclo-7,8-dihydroguanosine 5'-triphosphate to cyclic pyranopterin monophosphate (cPMP). This Corynebacterium glutamicum (strain ATCC 13032 / DSM 20300 / JCM 1318 / BCRC 11384 / CCUG 27702 / LMG 3730 / NBRC 12168 / NCIMB 10025 / NRRL B-2784 / 534) protein is Cyclic pyranopterin monophosphate synthase.